The primary structure comprises 88 residues: uncharacterized protein (88 aa).

This sequence to E.coli YihD.

This is an uncharacterized protein from Haemophilus influenzae (strain ATCC 51907 / DSM 11121 / KW20 / Rd).